The sequence spans 177 residues: MPIKSRIRSIPDYPKKGILFRDITTLIKDPVGFRLVIDSLTQHYLQEGMDFDVIVGIEARGFIIGGALSYALGKGFIPVRKPGKLPADVVSQEYQLEYGSDTIEIHVDALVAGQKVLLVDDLLATGGTALAAAALVEKVGGIVAEMAFIVNLPDIGGERKILEKGYSIYSLTDFEGE.

The protein belongs to the purine/pyrimidine phosphoribosyltransferase family. In terms of assembly, homodimer.

Its subcellular location is the cytoplasm. The enzyme catalyses AMP + diphosphate = 5-phospho-alpha-D-ribose 1-diphosphate + adenine. Its pathway is purine metabolism; AMP biosynthesis via salvage pathway; AMP from adenine: step 1/1. Catalyzes a salvage reaction resulting in the formation of AMP, that is energically less costly than de novo synthesis. In Pelodictyon phaeoclathratiforme (strain DSM 5477 / BU-1), this protein is Adenine phosphoribosyltransferase.